The primary structure comprises 363 residues: Putative replication factor C small subunit L510 (363 aa).

ATP is bound at residue 47-54; the sequence is GPPGTGKT.

This sequence belongs to the activator 1 small subunits family. RfcS subfamily.

Part of the RFC clamp loader complex which loads the PCNA sliding clamp onto DNA. This is Putative replication factor C small subunit L510 from Acanthamoeba polyphaga mimivirus (APMV).